Here is a 136-residue protein sequence, read N- to C-terminus: MIIGIGNDTEAISRVAEIVERQKSFITLILTPAERAAAAERKGKHQNEYIAGRFSAKEAFSKATGYGIGEKVQWQDIEILNEPNGRPVMKVKNFPYHTYVAITHSGDQVNTVVVIERLTLLEKMSIKLFPKRGVLS.

Residues D8 and E58 each coordinate Mg(2+).

This sequence belongs to the P-Pant transferase superfamily. AcpS family. Requires Mg(2+) as cofactor.

The protein localises to the cytoplasm. It catalyses the reaction apo-[ACP] + CoA = holo-[ACP] + adenosine 3',5'-bisphosphate + H(+). Transfers the 4'-phosphopantetheine moiety from coenzyme A to a Ser of acyl-carrier-protein. The sequence is that of Holo-[acyl-carrier-protein] synthase from Leuconostoc mesenteroides subsp. mesenteroides (strain ATCC 8293 / DSM 20343 / BCRC 11652 / CCM 1803 / JCM 6124 / NCDO 523 / NBRC 100496 / NCIMB 8023 / NCTC 12954 / NRRL B-1118 / 37Y).